The following is a 613-amino-acid chain: tRNA 5-methylaminomethyl-2-thiouridine biosynthesis bifunctional protein MnmC (613 aa).

The tract at residues methionine 1–glutamate 225 is tRNA (mnm(5)s(2)U34)-methyltransferase. An FAD-dependent cmnm(5)s(2)U34 oxidoreductase region spans residues isoleucine 252–leucine 613.

The protein in the N-terminal section; belongs to the methyltransferase superfamily. tRNA (mnm(5)s(2)U34)-methyltransferase family. This sequence in the C-terminal section; belongs to the DAO family. FAD is required as a cofactor.

The protein localises to the cytoplasm. It carries out the reaction 5-aminomethyl-2-thiouridine(34) in tRNA + S-adenosyl-L-methionine = 5-methylaminomethyl-2-thiouridine(34) in tRNA + S-adenosyl-L-homocysteine + H(+). Catalyzes the last two steps in the biosynthesis of 5-methylaminomethyl-2-thiouridine (mnm(5)s(2)U) at the wobble position (U34) in tRNA. Catalyzes the FAD-dependent demodification of cmnm(5)s(2)U34 to nm(5)s(2)U34, followed by the transfer of a methyl group from S-adenosyl-L-methionine to nm(5)s(2)U34, to form mnm(5)s(2)U34. This is tRNA 5-methylaminomethyl-2-thiouridine biosynthesis bifunctional protein MnmC from Campylobacter jejuni subsp. doylei (strain ATCC BAA-1458 / RM4099 / 269.97).